The sequence spans 146 residues: 3-dehydroquinate dehydratase (146 aa).

The active-site Proton acceptor is tyrosine 23. Positions 74, 80, and 87 each coordinate substrate. Residue histidine 100 is the Proton donor of the active site. Substrate is bound by residues 101–102 (IS) and arginine 111.

It belongs to the type-II 3-dehydroquinase family. Homododecamer.

The catalysed reaction is 3-dehydroquinate = 3-dehydroshikimate + H2O. It participates in metabolic intermediate biosynthesis; chorismate biosynthesis; chorismate from D-erythrose 4-phosphate and phosphoenolpyruvate: step 3/7. Its function is as follows. Catalyzes a trans-dehydration via an enolate intermediate. The polypeptide is 3-dehydroquinate dehydratase (Bacillus cereus (strain AH820)).